A 146-amino-acid polypeptide reads, in one-letter code: uncharacterized protein (146 aa).

This is an uncharacterized protein from Haemophilus influenzae (strain ATCC 51907 / DSM 11121 / KW20 / Rd).